A 282-amino-acid chain; its full sequence is Formate channel FocB (282 aa).

Over 1-35 (MRNKLSFDLQLSARKAAIAERIAAHKIARSKVSVF) the chain is Cytoplasmic. The chain crosses the membrane as a helical span at residues 36-56 (LMAMSAGVFMAIGFTFYLSVI). Residues 57–68 (ADAPSSQALTHL) lie on the Periplasmic side of the membrane. A helical transmembrane segment spans residues 69-89 (VGGLCFTLGFILLAVCGTSLF). Residues 90–112 (TSSVMTVMAKSRGVISWRTWLIN) lie on the Cytoplasmic side of the membrane. The helical transmembrane segment at 113 to 133 (ALLVACGNLAGIACFSLLIWF) threads the bilayer. Topologically, residues 134 to 163 (SGLVMSENAMWGVAVLHCAEGKMHHTFTES) are periplasmic. Residues 164–184 (VSLGIMCNLMVCLALWMSYCG) traverse the membrane as a helical segment. Over 185-190 (RSLCDK) the chain is Cytoplasmic. The chain crosses the membrane as a helical span at residues 191–211 (IVAMILPITLFVASGFEHCIA). At 212 to 248 (NLFVIPFAIAIRHFAPPPFWQLAHSSADNFPALTVSH) the chain is on the periplasmic side. A helical membrane pass occupies residues 249-269 (FITANLLPVMLGNIIGGAVLV). Residues 270-282 (SMCYRAIYLRQEP) are Cytoplasmic-facing.

The protein belongs to the FNT transporter (TC 1.A.16) family.

It is found in the cell inner membrane. It catalyses the reaction formate(in) = formate(out). The direction of formate translocation depends on external pH and electron donor source. Involved in the bidirectional transport of formate during mixed-acid fermentation. The polypeptide is Formate channel FocB (Escherichia coli (strain K12)).